The sequence spans 715 residues: Polyribonucleotide nucleotidyltransferase (715 aa).

Residues Asp-487 and Asp-493 each contribute to the Mg(2+) site. One can recognise a KH domain in the interval 554–613 (PRLYTFKINPEKIRDVIGKGGAVIRALTEETGTTIDIQDDGTITIAATSGEAAAAARSRI). An S1 motif domain is found at 623-691 (GKIYEGTVLK…DRGRVKLSMK (69 aa)).

This sequence belongs to the polyribonucleotide nucleotidyltransferase family. It depends on Mg(2+) as a cofactor.

It is found in the cytoplasm. It catalyses the reaction RNA(n+1) + phosphate = RNA(n) + a ribonucleoside 5'-diphosphate. In terms of biological role, involved in mRNA degradation. Catalyzes the phosphorolysis of single-stranded polyribonucleotides processively in the 3'- to 5'-direction. This is Polyribonucleotide nucleotidyltransferase from Dechloromonas aromatica (strain RCB).